Consider the following 418-residue polypeptide: Putative heat shock protein HSP 90-alpha A4 (418 aa).

ATP is bound by residues aspartate 33, lysine 52, phenylalanine 78, and arginine 204. Disordered regions lie at residues 255–289 and 383–418; these read EDLE…TSAK and GLGT…RMEK. Positions 265–274 are enriched in basic and acidic residues; the sequence is EKKKQEEGKQ.

The protein belongs to the heat shock protein 90 family. As to quaternary structure, homodimer.

It is found in the cytoplasm. In terms of biological role, putative molecular chaperone that may promote the maturation, structural maintenance and proper regulation of specific target proteins. In Homo sapiens (Human), this protein is Putative heat shock protein HSP 90-alpha A4 (HSP90AA4P).